A 65-amino-acid polypeptide reads, in one-letter code: MKKTCVVSVFLVLLLLKFHDLSMGEEISPLKKVAPREQIFPCPGFPCPKGYFCDKGSQKCREGTD.

Residues 1–24 (MKKTCVVSVFLVLLLLKFHDLSMG) form the signal peptide. Residues 25 to 36 (EEISPLKKVAPR) constitute a propeptide that is removed on maturation. Intrachain disulfides connect C42–C53 and C47–C60.

Expressed by the venom gland.

It localises to the secreted. Functionally, voltage-gated potassium channel inhibitor. The sequence is that of Kappa-scoloptoxin(04)-Ssd1a from Scolopendra dehaani (Thai centipede).